Reading from the N-terminus, the 778-residue chain is Protein translocase subunit SecA 2 (778 aa).

ATP contacts are provided by residues glutamine 94, 112-116 (GEGKT), and aspartate 501.

Belongs to the SecA family. As to quaternary structure, monomer and homodimer. Part of the essential Sec protein translocation apparatus which comprises SecA, SecYEG and auxiliary proteins SecDF. Other proteins may also be involved.

Its subcellular location is the cell membrane. The protein resides in the cytoplasm. It catalyses the reaction ATP + H2O + cellular proteinSide 1 = ADP + phosphate + cellular proteinSide 2.. In terms of biological role, part of the Sec protein translocase complex. Interacts with the SecYEG preprotein conducting channel. Has a central role in coupling the hydrolysis of ATP to the transfer of proteins into and across the cell membrane, serving as an ATP-driven molecular motor driving the stepwise translocation of polypeptide chains across the membrane. The sequence is that of Protein translocase subunit SecA 2 from Mycobacterium leprae (strain TN).